Reading from the N-terminus, the 183-residue chain is Translation initiation factor IF-3 (183 aa).

This sequence belongs to the IF-3 family. In terms of assembly, monomer.

Its subcellular location is the cytoplasm. IF-3 binds to the 30S ribosomal subunit and shifts the equilibrium between 70S ribosomes and their 50S and 30S subunits in favor of the free subunits, thus enhancing the availability of 30S subunits on which protein synthesis initiation begins. The chain is Translation initiation factor IF-3 from Yersinia enterocolitica serotype O:8 / biotype 1B (strain NCTC 13174 / 8081).